The following is a 177-amino-acid chain: Large ribosomal subunit protein uL6 (177 aa).

The segment covering P156 to R171 has biased composition (basic and acidic residues). The interval P156–K177 is disordered.

This sequence belongs to the universal ribosomal protein uL6 family. In terms of assembly, part of the 50S ribosomal subunit.

This protein binds to the 23S rRNA, and is important in its secondary structure. It is located near the subunit interface in the base of the L7/L12 stalk, and near the tRNA binding site of the peptidyltransferase center. The polypeptide is Large ribosomal subunit protein uL6 (Gluconacetobacter diazotrophicus (strain ATCC 49037 / DSM 5601 / CCUG 37298 / CIP 103539 / LMG 7603 / PAl5)).